Here is an 883-residue protein sequence, read N- to C-terminus: Bifunctional heparan sulfate N-deacetylase/N-sulfotransferase 2 (883 aa).

The Cytoplasmic portion of the chain corresponds to Met1–Arg18. Residues Leu19–Ser39 traverse the membrane as a helical; Signal-anchor for type II membrane protein segment. Residues Thr40–Gly883 lie on the Lumenal side of the membrane. A heparan sulfate N-deacetylase 2 region spans residues Ser41 to Glu597. The tract at residues Pro49 to Ala81 is disordered. Residues Pro65–Pro78 show a composition bias toward pro residues. Asn233, Asn350, and Asn400 each carry an N-linked (GlcNAc...) asparagine glycan. The tract at residues Lys598–Gly883 is heparan sulfate N-sulfotransferase 2. Catalysis depends on Lys613, which acts as the For sulfotransferase activity. A 3'-phosphoadenylyl sulfate-binding site is contributed by Lys613–Thr617. Asn666 carries N-linked (GlcNAc...) asparagine glycosylation. Residue Ser711 participates in 3'-phosphoadenylyl sulfate binding. 2 N-linked (GlcNAc...) asparagine glycosylation sites follow: Asn726 and Asn802. A disulfide bond links Cys817 and Cys827. Lys832–Tyr836 provides a ligand contact to 3'-phosphoadenylyl sulfate.

It belongs to the sulfotransferase 1 family. NDST subfamily. Monomer.

The protein localises to the golgi apparatus membrane. The enzyme catalyses alpha-D-glucosaminyl-[heparan sulfate](n) + 3'-phosphoadenylyl sulfate = N-sulfo-alpha-D-glucosaminyl-[heparan sulfate](n) + adenosine 3',5'-bisphosphate + 2 H(+). Its pathway is glycan metabolism; heparan sulfate biosynthesis. It participates in glycan metabolism; heparin biosynthesis. Its function is as follows. Essential bifunctional enzyme that catalyzes both the N-deacetylation and the N-sulfation of glucosamine (GlcNAc) of the glycosaminoglycan in heparan sulfate. Modifies the GlcNAc-GlcA disaccharide repeating sugar backbone to make N-sulfated heparosan, a prerequisite substrate for later modifications in heparin biosynthesis. Plays a role in determining the extent and pattern of sulfation of heparan sulfate. Required for the exosomal release of SDCBP, CD63 and syndecan. The chain is Bifunctional heparan sulfate N-deacetylase/N-sulfotransferase 2 (NDST2) from Homo sapiens (Human).